Reading from the N-terminus, the 130-residue chain is Small ribosomal subunit protein uS8 (130 aa).

This sequence belongs to the universal ribosomal protein uS8 family. In terms of assembly, part of the 30S ribosomal subunit. Contacts proteins S5 and S12.

Its function is as follows. One of the primary rRNA binding proteins, it binds directly to 16S rRNA central domain where it helps coordinate assembly of the platform of the 30S subunit. This is Small ribosomal subunit protein uS8 from Coxiella burnetii (strain RSA 331 / Henzerling II).